The following is a 71-amino-acid chain: Exodeoxyribonuclease 7 small subunit (71 aa).

This sequence belongs to the XseB family. In terms of assembly, heterooligomer composed of large and small subunits.

It localises to the cytoplasm. The catalysed reaction is Exonucleolytic cleavage in either 5'- to 3'- or 3'- to 5'-direction to yield nucleoside 5'-phosphates.. Its function is as follows. Bidirectionally degrades single-stranded DNA into large acid-insoluble oligonucleotides, which are then degraded further into small acid-soluble oligonucleotides. This Streptococcus uberis (strain ATCC BAA-854 / 0140J) protein is Exodeoxyribonuclease 7 small subunit.